The following is a 478-amino-acid chain: Hexokinase (478 aa).

The region spanning 21–465 is the Hexokinase domain; that stretch reads EYLLKELTEL…LGAGAAIIAA (445 aa). Residues 75-208 form a hexokinase small subdomain region; that stretch reads TGKEMGDYLA…KVPIEVVALI (134 aa). Residue lysine 111 participates in ATP binding. The glucose-binding stretch occupies residues 151–177; it reads PLGFTFSYPASQGSINEGYLQRWTKGF. Residues 209–454 form a hexokinase large subdomain region; sequence NDTTGTLVAS…DPIVIVPAED (246 aa).

This sequence belongs to the hexokinase family. As to quaternary structure, monomer.

The catalysed reaction is a D-hexose + ATP = a D-hexose 6-phosphate + ADP + H(+). The enzyme catalyses D-fructose + ATP = D-fructose 6-phosphate + ADP + H(+). It carries out the reaction D-glucose + ATP = D-glucose 6-phosphate + ADP + H(+). Its pathway is carbohydrate metabolism; hexose metabolism. It participates in carbohydrate degradation; glycolysis; D-glyceraldehyde 3-phosphate and glycerone phosphate from D-glucose: step 1/4. Functionally, catalyzes the phosphorylation of hexose, such as D-glucose and D-fructose, to hexose 6-phosphate (D-glucose 6-phosphate and D-fructose 6-phosphate, respectively). Mediates the initial step of glycolysis by catalyzing phosphorylation of D-glucose to D-glucose 6-phosphate. This Schwanniomyces occidentalis (Yeast) protein is Hexokinase (HXK).